The following is a 188-amino-acid chain: Probable nicotinate-nucleotide adenylyltransferase (188 aa).

The protein belongs to the NadD family.

The catalysed reaction is nicotinate beta-D-ribonucleotide + ATP + H(+) = deamido-NAD(+) + diphosphate. Its pathway is cofactor biosynthesis; NAD(+) biosynthesis; deamido-NAD(+) from nicotinate D-ribonucleotide: step 1/1. Catalyzes the reversible adenylation of nicotinate mononucleotide (NaMN) to nicotinic acid adenine dinucleotide (NaAD). The chain is Probable nicotinate-nucleotide adenylyltransferase from Solibacter usitatus (strain Ellin6076).